The primary structure comprises 429 residues: MSLHSKSESLYAQAKQVIPGGVNSPVRAFNGVGGVPLFIERADGAYLFDVDGKAYIDYVGSWGPMVLGHNHPAIRNAVIEAAQRGLSFGAPTEMEVKMAELVTELVPTMDMVRMVNSGTEATMSAIRLARGYTNRDKIIKFEGCYHGHADCLLVKAGSGALTLGQPNSPGVPADFAKHTLTCTFNDLDSVRTAFEQYPSEIACIIVEPVAGNMNCVPPLPEFLPGLRALCDKYGALLIIDEVMTGFRVALAGAQSYYDVVPDLTCLGKIIGGGMPVGAFGGRREVMAALAPTGPVYQAGTLSGNPIAMAAGFACLTEVSQVGVHQTLTELTDMLAAGLLHAAKEENVALVVNHVGGMFGLFFTDALSVTSYQDVMQCDVERFKRFFHLMLEEGVYLAPSAFEAGFMSIAHSKEDIQRTIDAARRCFAKL.

Lys-268 is modified (N6-(pyridoxal phosphate)lysine).

This sequence belongs to the class-III pyridoxal-phosphate-dependent aminotransferase family. HemL subfamily. As to quaternary structure, homodimer. Pyridoxal 5'-phosphate serves as cofactor.

It is found in the cytoplasm. The catalysed reaction is (S)-4-amino-5-oxopentanoate = 5-aminolevulinate. Its pathway is porphyrin-containing compound metabolism; protoporphyrin-IX biosynthesis; 5-aminolevulinate from L-glutamyl-tRNA(Glu): step 2/2. The chain is Glutamate-1-semialdehyde 2,1-aminomutase from Serratia proteamaculans (strain 568).